We begin with the raw amino-acid sequence, 670 residues long: Mannosyl-oligosaccharide alpha-1,2-mannosidase IA (670 aa).

The Cytoplasmic portion of the chain corresponds to 1–30; sequence MTGILPTYQRFVNGVPVPSISRRSFRLREK. The chain crosses the membrane as a helical; Signal-anchor for type II membrane protein span at residues 31 to 51; the sequence is YLIVSVLLTFGIVWLGALFYL. Residues 52-670 lie on the Lumenal side of the membrane; that stretch reads PEFKSSNSVN…EPAHAQNNRI (619 aa). Asn-61 carries N-linked (GlcNAc...) asparagine glycosylation. The segment at 135 to 177 is disordered; it reads DVAPSVSSSRGPSKPPVDAIEEPAVGNNAANKDVSPSGPKAES. Cysteines 480 and 512 form a disulfide. The active-site Proton donor is Glu-526. Residue Thr-637 participates in Ca(2+) binding.

It belongs to the glycosyl hydrolase 47 family. It depends on Ca(2+) as a cofactor. In terms of processing, N-glycosylated. Contains high mannose-type oligosaccharides.

The protein resides in the golgi apparatus membrane. It catalyses the reaction N(4)-(alpha-D-Man-(1-&gt;2)-alpha-D-Man-(1-&gt;2)-alpha-D-Man-(1-&gt;3)-[alpha-D-Man-(1-&gt;2)-alpha-D-Man-(1-&gt;3)-[alpha-D-Man-(1-&gt;2)-alpha-D-Man-(1-&gt;6)]-alpha-D-Man-(1-&gt;6)]-beta-D-Man-(1-&gt;4)-beta-D-GlcNAc-(1-&gt;4)-beta-D-GlcNAc)-L-asparaginyl-[protein] (N-glucan mannose isomer 9A1,2,3B1,2,3) + 4 H2O = N(4)-(alpha-D-Man-(1-&gt;3)-[alpha-D-Man-(1-&gt;3)-[alpha-D-Man-(1-&gt;6)]-alpha-D-Man-(1-&gt;6)]-beta-D-Man-(1-&gt;4)-beta-D-GlcNAc-(1-&gt;4)-beta-D-GlcNAc)-L-asparaginyl-[protein] (N-glucan mannose isomer 5A1,2) + 4 beta-D-mannose. The enzyme catalyses N(4)-(alpha-D-Man-(1-&gt;2)-alpha-D-Man-(1-&gt;2)-alpha-D-Man-(1-&gt;3)-[alpha-D-Man-(1-&gt;3)-[alpha-D-Man-(1-&gt;2)-alpha-D-Man-(1-&gt;6)]-alpha-D-Man-(1-&gt;6)]-beta-D-Man-(1-&gt;4)-beta-D-GlcNAc-(1-&gt;4)-beta-D-GlcNAc)-L-asparaginyl-[protein] (N-glucan mannose isomer 8A1,2,3B1,3) + 3 H2O = N(4)-(alpha-D-Man-(1-&gt;3)-[alpha-D-Man-(1-&gt;3)-[alpha-D-Man-(1-&gt;6)]-alpha-D-Man-(1-&gt;6)]-beta-D-Man-(1-&gt;4)-beta-D-GlcNAc-(1-&gt;4)-beta-D-GlcNAc)-L-asparaginyl-[protein] (N-glucan mannose isomer 5A1,2) + 3 beta-D-mannose. Its pathway is protein modification; protein glycosylation. Strongly inhibited by 1-deoxymannojirimycin, an inhibitor of class I alpha-mannosidases, and by EDTA. EDTA inhibition is reversed by the addition of calcium, but not of magnesium. Its function is as follows. Involved in the maturation of Asn-linked oligosaccharides. Converts Man(9)GlcNAc(2) to Man(5)GlcNAc(2) primarily through the Man(7)GlcNAc(2) isomer C processing intermediate. The polypeptide is Mannosyl-oligosaccharide alpha-1,2-mannosidase IA (Spodoptera frugiperda (Fall armyworm)).